Consider the following 100-residue polypeptide: Putative pterin-4-alpha-carbinolamine dehydratase (100 aa).

The protein belongs to the pterin-4-alpha-carbinolamine dehydratase family.

It catalyses the reaction (4aS,6R)-4a-hydroxy-L-erythro-5,6,7,8-tetrahydrobiopterin = (6R)-L-erythro-6,7-dihydrobiopterin + H2O. The chain is Putative pterin-4-alpha-carbinolamine dehydratase from Bradyrhizobium sp. (strain ORS 278).